The sequence spans 156 residues: Small ribosomal subunit protein uS7 (156 aa).

Belongs to the universal ribosomal protein uS7 family. In terms of assembly, part of the 30S ribosomal subunit. Contacts proteins S9 and S11.

Its function is as follows. One of the primary rRNA binding proteins, it binds directly to 16S rRNA where it nucleates assembly of the head domain of the 30S subunit. Is located at the subunit interface close to the decoding center, probably blocks exit of the E-site tRNA. This chain is Small ribosomal subunit protein uS7, found in Proteus mirabilis (strain HI4320).